The following is a 136-amino-acid chain: Protein PsiE (136 aa).

4 helical membrane-spanning segments follow: residues 15-35, 55-75, 82-102, and 108-128; these read ILQT…VVFL, YELV…ALIV, FHFP…RLII, and PLDV…LWLC.

The protein belongs to the PsiE family.

It localises to the cell inner membrane. The sequence is that of Protein PsiE from Escherichia coli O17:K52:H18 (strain UMN026 / ExPEC).